The primary structure comprises 537 residues: O-phosphoserine--tRNA(Cys) ligase (537 aa).

Residues 186-188 (HMT), 231-233 (SAS), 273-274 (YY), and asparagine 317 contribute to the substrate site.

It belongs to the class-II aminoacyl-tRNA synthetase family. O-phosphoseryl-tRNA(Cys) synthetase subfamily. As to quaternary structure, homotetramer. Interacts with SepCysS.

It carries out the reaction tRNA(Cys) + O-phospho-L-serine + ATP = O-phospho-L-seryl-tRNA(Cys) + AMP + diphosphate. Functionally, catalyzes the attachment of O-phosphoserine (Sep) to tRNA(Cys). The polypeptide is O-phosphoserine--tRNA(Cys) ligase (Methanococcus maripaludis (strain DSM 14266 / JCM 13030 / NBRC 101832 / S2 / LL)).